Reading from the N-terminus, the 295-residue chain is Glutamyl-Q tRNA(Asp) synthetase (295 aa).

L-glutamate contacts are provided by residues 9–13 (RFAPT) and Glu-45. Positions 12–22 (PTPSGFLHFGS) match the 'HIGH' region motif. Zn(2+)-binding residues include Cys-101, Cys-103, Tyr-115, and Cys-119. L-glutamate is bound by residues Tyr-172 and Arg-190. Positions 228 to 232 (KLGKS) match the 'KMSKS' region motif. Lys-231 serves as a coordination point for ATP.

This sequence belongs to the class-I aminoacyl-tRNA synthetase family. GluQ subfamily. Requires Zn(2+) as cofactor.

Its function is as follows. Catalyzes the tRNA-independent activation of glutamate in presence of ATP and the subsequent transfer of glutamate onto a tRNA(Asp). Glutamate is transferred on the 2-amino-5-(4,5-dihydroxy-2-cyclopenten-1-yl) moiety of the queuosine in the wobble position of the QUC anticodon. In Pseudomonas entomophila (strain L48), this protein is Glutamyl-Q tRNA(Asp) synthetase.